Reading from the N-terminus, the 237-residue chain is Probable transcriptional regulatory protein EAT1b_0153 (237 aa).

This sequence belongs to the TACO1 family. YeeN subfamily.

The protein resides in the cytoplasm. The protein is Probable transcriptional regulatory protein EAT1b_0153 of Exiguobacterium sp. (strain ATCC BAA-1283 / AT1b).